Consider the following 180-residue polypeptide: Inner membrane-spanning protein YciB (180 aa).

5 helical membrane passes run 25–45 (QNAT…CYII), 49–69 (VSKL…ITLI), 76–96 (IKIK…MSGI), 118–138 (ITLS…NEIV), and 150–170 (FKVF…LPLL).

This sequence belongs to the YciB family.

The protein resides in the cell inner membrane. Its function is as follows. Plays a role in cell envelope biogenesis, maintenance of cell envelope integrity and membrane homeostasis. This is Inner membrane-spanning protein YciB from Rickettsia akari (strain Hartford).